We begin with the raw amino-acid sequence, 226 residues long: PKHD-type hydroxylase Pfl01_0799 (226 aa).

A Fe2OG dioxygenase domain is found at 78–178 (KVFPPLLNCY…RYASFFWTQS (101 aa)). Residues His-96, Asp-98, and His-159 each coordinate Fe cation. Arg-169 serves as a coordination point for 2-oxoglutarate.

It depends on Fe(2+) as a cofactor. Requires L-ascorbate as cofactor.

The sequence is that of PKHD-type hydroxylase Pfl01_0799 from Pseudomonas fluorescens (strain Pf0-1).